The following is a 376-amino-acid chain: Mitogen-activated protein kinase 2 (376 aa).

The 288-residue stretch at 32–319 (YVPIKPIGRG…VTEALQHPYM (288 aa)) folds into the Protein kinase domain. Residues 38–46 (IGRGAYGVV) and lysine 61 contribute to the ATP site. Catalysis depends on aspartate 158, which acts as the Proton acceptor. Phosphothreonine is present on threonine 191. The TXY signature appears at 191–193 (TEY). At tyrosine 193 the chain carries Phosphotyrosine. The residue at position 196 (threonine 196) is a Phosphothreonine.

The protein belongs to the protein kinase superfamily. CMGC Ser/Thr protein kinase family. MAP kinase subfamily. In terms of assembly, interacts with MKK3. Dually phosphorylated on Thr-191 and Tyr-193, which activates the enzyme. Phosphorylated on Ser residue. Highest levels in the stem. Present in the leaf, root and flower, but not in seeds.

The enzyme catalyses L-seryl-[protein] + ATP = O-phospho-L-seryl-[protein] + ADP + H(+). It catalyses the reaction L-threonyl-[protein] + ATP = O-phospho-L-threonyl-[protein] + ADP + H(+). Activated by threonine and tyrosine phosphorylation. The sequence is that of Mitogen-activated protein kinase 2 (MPK2) from Arabidopsis thaliana (Mouse-ear cress).